Consider the following 437-residue polypeptide: Adenylosuccinate synthetase (437 aa).

GTP contacts are provided by residues 12-18 and 40-42; these read GDEGKGK and GHT. Asp-13 functions as the Proton acceptor in the catalytic mechanism. Mg(2+)-binding residues include Asp-13 and Gly-40. Residues 13-16, 38-41, Thr-131, Arg-145, Gln-226, Thr-241, and Arg-305 contribute to the IMP site; these read DEGK and NAGH. Catalysis depends on His-41, which acts as the Proton donor. Residue 301-307 coordinates substrate; that stretch reads ATTGRRR. GTP contacts are provided by residues Arg-307, 333–335, and 415–417; these read KLD and SVG.

The protein belongs to the adenylosuccinate synthetase family. As to quaternary structure, homodimer. It depends on Mg(2+) as a cofactor.

The protein localises to the cytoplasm. The enzyme catalyses IMP + L-aspartate + GTP = N(6)-(1,2-dicarboxyethyl)-AMP + GDP + phosphate + 2 H(+). It participates in purine metabolism; AMP biosynthesis via de novo pathway; AMP from IMP: step 1/2. Plays an important role in the de novo pathway of purine nucleotide biosynthesis. Catalyzes the first committed step in the biosynthesis of AMP from IMP. This is Adenylosuccinate synthetase from Desulfotalea psychrophila (strain LSv54 / DSM 12343).